Reading from the N-terminus, the 206-residue chain is Large ribosomal subunit protein uL4 (206 aa).

Residues Arg42–Ser54 are compositionally biased toward polar residues. Residues Arg42–Val93 form a disordered region. The segment covering Phe64–Ser76 has biased composition (basic residues).

The protein belongs to the universal ribosomal protein uL4 family. As to quaternary structure, part of the 50S ribosomal subunit.

Functionally, one of the primary rRNA binding proteins, this protein initially binds near the 5'-end of the 23S rRNA. It is important during the early stages of 50S assembly. It makes multiple contacts with different domains of the 23S rRNA in the assembled 50S subunit and ribosome. Its function is as follows. Forms part of the polypeptide exit tunnel. This is Large ribosomal subunit protein uL4 from Bartonella henselae (strain ATCC 49882 / DSM 28221 / CCUG 30454 / Houston 1) (Rochalimaea henselae).